An 89-amino-acid chain; its full sequence is Small ribosomal subunit protein uS15 (89 aa).

Basic and acidic residues predominate over residues 1–10; it reads MSLDTTEKQE. Residues 1–23 form a disordered region; sequence MSLDTTEKQELINAHQTHATDTG. A compositionally biased stretch (polar residues) spans 14–23; sequence AHQTHATDTG.

It belongs to the universal ribosomal protein uS15 family. In terms of assembly, part of the 30S ribosomal subunit. Forms a bridge to the 50S subunit in the 70S ribosome, contacting the 23S rRNA.

Its function is as follows. One of the primary rRNA binding proteins, it binds directly to 16S rRNA where it helps nucleate assembly of the platform of the 30S subunit by binding and bridging several RNA helices of the 16S rRNA. Functionally, forms an intersubunit bridge (bridge B4) with the 23S rRNA of the 50S subunit in the ribosome. In Synechococcus sp. (strain WH7803), this protein is Small ribosomal subunit protein uS15.